A 355-amino-acid polypeptide reads, in one-letter code: Cyclic nucleotide-gated potassium channel mll3241 (355 aa).

Over 1-12 (MSVLPFLRIYAP) the chain is Cytoplasmic. A helical membrane pass occupies residues 13–30 (LNAVLAAPGLLAVAALTI). Residues 31–38 (PDMSGRSR) lie on the Periplasmic side of the membrane. Residues 39 to 61 (LALAALLAVIWGAYLLQLAATLL) traverse the membrane as a helical segment. The Cytoplasmic segment spans residues 62 to 74 (KRRAGVVRDRTPK). Residues 75 to 94 (IAIDVLAVLVPLAAFLLDGS) traverse the membrane as a helical segment. Residues 95 to 112 (PDWSLYCAVWLLKPLRDS) form a helical membrane-spanning segment. Residues 113–129 (TFFPVLGRVLANEARNL) are Cytoplasmic-facing. The helical transmembrane segment at 130 to 150 (IGVTTLFGVVLFAVALAAYVI) threads the bilayer. Over 151–161 (ERDIQPEKFGS) the chain is Periplasmic. The segment at residues 162-180 (IPQAMWWAVVTLSTTGYGD) is an intramembrane region (pore-forming). A Selectivity filter motif is present at residues 175–180 (TTGYGD). Topologically, residues 181 to 185 (TIPQS) are periplasmic. The helical transmembrane segment at 186–210 (FAGRVLAGAVMMSGIGIFGLWAGIL) threads the bilayer. Over 211-355 (ATGFYQEVRR…LERRGAAASA (145 aa)) the chain is Cytoplasmic. Residues 297 to 298 (GE), 307 to 308 (RS), and arginine 348 contribute to the 3',5'-cyclic AMP site.

Belongs to the potassium channel family. As to quaternary structure, homotetramer.

It localises to the cell membrane. Functionally, cyclic nucleotide-regulated potassium channel activated by cAMP. This Mesorhizobium japonicum (strain LMG 29417 / CECT 9101 / MAFF 303099) (Mesorhizobium loti (strain MAFF 303099)) protein is Cyclic nucleotide-gated potassium channel mll3241.